A 373-amino-acid chain; its full sequence is Anhydro-N-acetylmuramic acid kinase (373 aa).

Residue 12 to 19 (GTSLDGVD) coordinates ATP.

This sequence belongs to the anhydro-N-acetylmuramic acid kinase family.

It catalyses the reaction 1,6-anhydro-N-acetyl-beta-muramate + ATP + H2O = N-acetyl-D-muramate 6-phosphate + ADP + H(+). Its pathway is amino-sugar metabolism; 1,6-anhydro-N-acetylmuramate degradation. It participates in cell wall biogenesis; peptidoglycan recycling. Its function is as follows. Catalyzes the specific phosphorylation of 1,6-anhydro-N-acetylmuramic acid (anhMurNAc) with the simultaneous cleavage of the 1,6-anhydro ring, generating MurNAc-6-P. Is required for the utilization of anhMurNAc either imported from the medium or derived from its own cell wall murein, and thus plays a role in cell wall recycling. The sequence is that of Anhydro-N-acetylmuramic acid kinase from Salmonella dublin (strain CT_02021853).